Consider the following 105-residue polypeptide: Insulin (105 aa).

The signal sequence occupies residues 1-24; it reads MALWTRLVPLLALLALWAPAPAHA. Cystine bridges form between C31/C91, C43/C104, and C90/C95. A propeptide spans 57–82 (c peptide); that stretch reads EVEGPQVGALELAGGPGAGGLEGPPQ.

This sequence belongs to the insulin family. Heterodimer of a B chain and an A chain linked by two disulfide bonds.

The protein resides in the secreted. Its function is as follows. Insulin decreases blood glucose concentration. It increases cell permeability to monosaccharides, amino acids and fatty acids. It accelerates glycolysis, the pentose phosphate cycle, and glycogen synthesis in liver. This is Insulin (INS) from Ovis aries (Sheep).